We begin with the raw amino-acid sequence, 213 residues long: uncharacterized protein (213 aa).

This is an uncharacterized protein from Escherichia coli (strain K12).